A 442-amino-acid chain; its full sequence is G-protein coupled receptor family C group 5 member C (442 aa).

Positions 1–23 (MAIHRTVLMCLGLPLFLLPGARA) are cleaved as a signal peptide. Residues 24–50 (QEQAPPGCSPDLNPLYYNLCDRSEAWG) are Extracellular-facing. The chain crosses the membrane as a helical span at residues 51-71 (IILEAVAGAGVVTTFVLTIIL). At 72-85 (VASLPFVQDTKKRS) the chain is on the cytoplasmic side. Residues 86–106 (LLGTQVFFLLGTLGLFCLVFA) form a helical membrane-spanning segment. The Extracellular portion of the chain corresponds to 107–120 (CVVKPSFSTCASRR). The helical transmembrane segment at 121–141 (FLFGVLFAICFSCLVAHVLAL) threads the bilayer. Topologically, residues 142–155 (HFLVRKNHGPRGWV) are cytoplasmic. Residues 156-176 (IFLVALLLSLVEVIINTEWLI) traverse the membrane as a helical segment. The Extracellular portion of the chain corresponds to 177–209 (ITLVRGAGTEGDALGNGSAGWVAVSPCAIANAD). N192 carries N-linked (GlcNAc...) asparagine glycosylation. The chain crosses the membrane as a helical span at residues 210–230 (FVMALIYVMLLLLCAFSGAWS). The Cytoplasmic segment spans residues 231–242 (ALCGRFKRWRKH). The helical transmembrane segment at 243-263 (GVFILLTTTASIAVWVVWIVM) threads the bilayer. Residues 264 to 280 (YTYGNRQHNSPTWDDPT) are Extracellular-facing. Residues 281–301 (LAIALATNAWAFVLFYVIPEV) traverse the membrane as a helical segment. Residues 302-442 (SQVTRSSPEQ…QVFRNPYVWD (141 aa)) are Cytoplasmic-facing. Phosphoserine occurs at positions 345, 384, 404, and 407. A Phosphotyrosine modification is found at Y415. A Phosphothreonine modification is found at T424.

This sequence belongs to the G-protein coupled receptor 3 family.

The protein localises to the cell membrane. In terms of biological role, this retinoic acid-inducible G-protein coupled receptor provide evidence for a possible interaction between retinoid and G-protein signaling pathways. The sequence is that of G-protein coupled receptor family C group 5 member C (GPRC5C) from Bos taurus (Bovine).